Consider the following 108-residue polypeptide: uncharacterized protein (108 aa).

3 consecutive transmembrane segments (helical) span residues 24-44, 55-75, and 88-108; these read LWIT…GGLL, AHMA…YLAM, and RFEI…SIGI.

This sequence to cation A.eutrophus efflux system protein CzcD.

The protein localises to the cell membrane. This is an uncharacterized protein from Geobacillus stearothermophilus (Bacillus stearothermophilus).